The sequence spans 355 residues: MDISSYPSLETYEARENTGSRSSNRLAMQISFAMWKIFELYQNEDFTVAMDCIDDVVIFKTSNENPTIVTYQLKTKDATTGNFELRKLIGDNVFLKMYDHIEKIDADVEEIYLITNNPLKFRKKTVNAERILFEKLDEDIKELIEENMSQSKVFADKGLSSKFIYSLVDMSFHNHREISQYKLNSLLMKEKIDISITAADALFNALQDILTTKQNYEFSLQDEFNTVLKKKSYSKTEFTSLLDNSKKINAYVLSFEDIRTNYKSKPLKLKEESLYRRAMASVKEKCNKSPNILQNINEDIFQYAKEQIDINDEITRIELVILLQSVFDDKINVELSKEEKEILYMQNIELALREG.

Its function is as follows. Component of antiviral defense system Lamassu type II, composed of LmuA and LmuB. Expression of Lamassu type II in B.subtilis (strain BEST7003) confers resistance to phage SpBeta. May be a nuclease. The polypeptide is Lamassu protein LmuA (Bacillus cereus (strain VD014)).